The sequence spans 27 residues: Caerulein precursor fragment R7 (27 aa).

In terms of tissue distribution, expressed by the skin glands.

Its subcellular location is the secreted. Functionally, antimicrobial peptide. This Xenopus ruwenzoriensis (Uganda clawed frog) protein is Caerulein precursor fragment R7.